A 359-amino-acid polypeptide reads, in one-letter code: Probable L-ascorbate peroxidase 7, chloroplastic (359 aa).

Residues 1–71 (MAAQRLAALH…KAAGSGRSVM (71 aa)) constitute a chloroplast transit peptide. His-118 (proton acceptor) is an active-site residue. His-247 lines the heme b pocket. A K(+)-binding site is contributed by Thr-248. Positions 251–277 (RSRPERSGWGKPETKYTKNGPGAPGGQ) are disordered. Basic and acidic residues predominate over residues 252 to 266 (SRPERSGWGKPETKY). K(+)-binding residues include Thr-280 and Asp-287.

The protein belongs to the peroxidase family. Ascorbate peroxidase subfamily. Heme b serves as cofactor. Expressed in roots, leaves, stems and flowers.

Its subcellular location is the plastid. The protein resides in the chloroplast stroma. It catalyses the reaction L-ascorbate + H2O2 = L-dehydroascorbate + 2 H2O. Plays a key role in hydrogen peroxide removal. This Oryza sativa subsp. japonica (Rice) protein is Probable L-ascorbate peroxidase 7, chloroplastic.